The primary structure comprises 525 residues: Rho guanine nucleotide exchange factor gef3 (525 aa).

One can recognise a DH domain in the interval 72-268 (AIISVLEEFR…EIASQRMNEL (197 aa)).

It localises to the cytoplasm. Has a role in the control of cell polarity and cytokinesis. Involved in bipolar growth and septum formation. The protein is Rho guanine nucleotide exchange factor gef3 (gef3) of Schizosaccharomyces pombe (strain 972 / ATCC 24843) (Fission yeast).